The primary structure comprises 452 residues: Probable receptor-like protein kinase At5g20050 (452 aa).

A signal peptide spans 1 to 23 (MEDKKANIIATILILALVVVIIA). The Extracellular portion of the chain corresponds to 24–33 (ARVSLKLSKT). Residues 34-54 (FYLIAGVDISLILAVICFLII) traverse the membrane as a helical segment. At 55–452 (RSRYNKERKL…SSIISPISPR (398 aa)) the chain is on the cytoplasmic side. In terms of domain architecture, Protein kinase spans 103-392 (DGFRSLIGKG…MVIEMLEGRV (290 aa)). ATP is bound by residues 109–117 (IGKGGSGSV) and Lys131. Tyr178 bears the Phosphotyrosine mark. The Proton acceptor role is filled by Asp236. 2 positions are modified to phosphothreonine: Thr270 and Thr275.

The protein belongs to the protein kinase superfamily. Ser/Thr protein kinase family.

It is found in the membrane. It catalyses the reaction L-seryl-[protein] + ATP = O-phospho-L-seryl-[protein] + ADP + H(+). It carries out the reaction L-threonyl-[protein] + ATP = O-phospho-L-threonyl-[protein] + ADP + H(+). The chain is Probable receptor-like protein kinase At5g20050 from Arabidopsis thaliana (Mouse-ear cress).